Here is a 39-residue protein sequence, read N- to C-terminus: SPbeta prophage-derived uncharacterized protein YorT (39 aa).

The polypeptide is SPbeta prophage-derived uncharacterized protein YorT (yorT) (Bacillus subtilis (strain 168)).